The sequence spans 368 residues: Probable dual-specificity RNA methyltransferase RlmN (368 aa).

Glu109 acts as the Proton acceptor in catalysis. The Radical SAM core domain maps to 115-355 (YPDRVTMCIS…VTVRDTRGQE (241 aa)). Cys122 and Cys360 form a disulfide bridge. [4Fe-4S] cluster-binding residues include Cys129, Cys133, and Cys136. S-adenosyl-L-methionine is bound by residues 184-185 (GE), Ser218, 241-243 (SLH), and Asn317. Catalysis depends on Cys360, which acts as the S-methylcysteine intermediate.

The protein belongs to the radical SAM superfamily. RlmN family. The cofactor is [4Fe-4S] cluster.

It localises to the cytoplasm. It carries out the reaction adenosine(2503) in 23S rRNA + 2 reduced [2Fe-2S]-[ferredoxin] + 2 S-adenosyl-L-methionine = 2-methyladenosine(2503) in 23S rRNA + 5'-deoxyadenosine + L-methionine + 2 oxidized [2Fe-2S]-[ferredoxin] + S-adenosyl-L-homocysteine. The catalysed reaction is adenosine(37) in tRNA + 2 reduced [2Fe-2S]-[ferredoxin] + 2 S-adenosyl-L-methionine = 2-methyladenosine(37) in tRNA + 5'-deoxyadenosine + L-methionine + 2 oxidized [2Fe-2S]-[ferredoxin] + S-adenosyl-L-homocysteine. Functionally, specifically methylates position 2 of adenine 2503 in 23S rRNA and position 2 of adenine 37 in tRNAs. This chain is Probable dual-specificity RNA methyltransferase RlmN, found in Streptomyces griseus subsp. griseus (strain JCM 4626 / CBS 651.72 / NBRC 13350 / KCC S-0626 / ISP 5235).